The primary structure comprises 1198 residues: Fibronectin type-III domain-containing protein 3a (1198 aa).

The segment covering Lys189–Leu201 has biased composition (basic and acidic residues). Residues Lys189 to Lys256 form a disordered region. Over residues Gly229–Ser247 the composition is skewed to low complexity. Fibronectin type-III domains follow at residues Asn269–Cys370, Ala374–Thr466, Thr470–Asp563, Ala567–Val661, Pro665–Gly758, Gln762–Ser852, Ser864–Leu951, Pro952–Ser1045, and Val1046–Pro1151. The tract at residues Ser553–Lys574 is disordered. A helical transmembrane segment spans residues Val1172 to Ile1192.

The protein belongs to the FNDC3 family.

Its subcellular location is the golgi apparatus membrane. The chain is Fibronectin type-III domain-containing protein 3a (FNDC3A) from Gallus gallus (Chicken).